The sequence spans 249 residues: ATP synthase subunit a (249 aa).

A run of 6 helical transmembrane segments spans residues 33-53, 83-103, 113-133, 139-159, 188-208, and 216-236; these read YMLI…AQLV, FFPL…IGII, LIVT…YGVA, FFSI…VMFI, VFAG…WVGG, and VALY…FAIL.

It belongs to the ATPase A chain family. As to quaternary structure, F-type ATPases have 2 components, CF(1) - the catalytic core - and CF(0) - the membrane proton channel. CF(1) has five subunits: alpha(3), beta(3), gamma(1), delta(1), epsilon(1). CF(0) has three main subunits: a(1), b(2) and c(9-12). The alpha and beta chains form an alternating ring which encloses part of the gamma chain. CF(1) is attached to CF(0) by a central stalk formed by the gamma and epsilon chains, while a peripheral stalk is formed by the delta and b chains.

It localises to the cell inner membrane. In terms of biological role, key component of the proton channel; it plays a direct role in the translocation of protons across the membrane. The chain is ATP synthase subunit a from Bradyrhizobium diazoefficiens (strain JCM 10833 / BCRC 13528 / IAM 13628 / NBRC 14792 / USDA 110).